A 223-amino-acid chain; its full sequence is 3,4-dihydroxy-2-butanone 4-phosphate synthase (223 aa).

D-ribulose 5-phosphate-binding positions include 47–48, Asp52, 160–164, and Glu184; these read RE and RRGHT. A Mg(2+)-binding site is contributed by Glu48. His163 is a Mg(2+) binding site.

Belongs to the DHBP synthase family. As to quaternary structure, homodimer. Mg(2+) is required as a cofactor. The cofactor is Mn(2+).

It catalyses the reaction D-ribulose 5-phosphate = (2S)-2-hydroxy-3-oxobutyl phosphate + formate + H(+). Its pathway is cofactor biosynthesis; riboflavin biosynthesis; 2-hydroxy-3-oxobutyl phosphate from D-ribulose 5-phosphate: step 1/1. In terms of biological role, catalyzes the conversion of D-ribulose 5-phosphate to formate and 3,4-dihydroxy-2-butanone 4-phosphate. The polypeptide is 3,4-dihydroxy-2-butanone 4-phosphate synthase (Cupriavidus pinatubonensis (strain JMP 134 / LMG 1197) (Cupriavidus necator (strain JMP 134))).